Reading from the N-terminus, the 58-residue chain is Large ribosomal subunit protein bL32 (58 aa).

The protein belongs to the bacterial ribosomal protein bL32 family.

The polypeptide is Large ribosomal subunit protein bL32 (Prochlorococcus marinus (strain MIT 9303)).